The following is a 226-amino-acid chain: Fibrillarin-like rRNA/tRNA 2'-O-methyltransferase (226 aa).

S-adenosyl-L-methionine is bound by residues 85 to 86 (TT), 104 to 105 (EF), 129 to 130 (DA), and 149 to 152 (DVAQ).

This sequence belongs to the methyltransferase superfamily. Fibrillarin family. Interacts with nop5. Component of box C/D small ribonucleoprotein (sRNP) particles that contain rpl7ae, FlpA and nop5, plus a guide RNA.

In terms of biological role, involved in pre-rRNA and tRNA processing. Utilizes the methyl donor S-adenosyl-L-methionine to catalyze the site-specific 2'-hydroxyl methylation of ribose moieties in rRNA and tRNA. Site specificity is provided by a guide RNA that base pairs with the substrate. Methylation occurs at a characteristic distance from the sequence involved in base pairing with the guide RNA. This chain is Fibrillarin-like rRNA/tRNA 2'-O-methyltransferase, found in Thermococcus onnurineus (strain NA1).